The sequence spans 493 residues: Dihydro-heme d1 dehydrogenase (493 aa).

An N-terminal signal peptide occupies residues 1 to 18; that stretch reads MRLIGLALGLLLGALAQA. Positions 19–96 constitute a Cytochrome c domain; that stretch reads GEAPGEALYR…ALVAYLYQAP (78 aa). 5 residues coordinate heme c: C31, C34, H35, R68, and M73. The tract at residues 114 to 468 is D1-heme domain; sequence PHPLATLPSR…YDAHSLEEVK (355 aa). Heme d1 is bound by residues H165, G167, K169, R182, R207, N208, H341, R390, and H435. R182 contributes to the heme c binding site.

This sequence belongs to the cytochrome c family. In terms of assembly, monomer. The cofactor is heme c.

It localises to the periplasm. It catalyses the reaction dihydro-heme d1 + A = heme d1 + AH2. It participates in porphyrin-containing compound metabolism. Functionally, involved in heme d1 biosynthesis. Catalyzes the introduction of a double bond into the propionate side chain of pyrrole ring D of dihydro-heme d1, therefore converting dihydro-heme d1 to heme d1. In Pseudomonas aeruginosa (strain ATCC 15692 / DSM 22644 / CIP 104116 / JCM 14847 / LMG 12228 / 1C / PRS 101 / PAO1), this protein is Dihydro-heme d1 dehydrogenase.